A 111-amino-acid chain; its full sequence is MSRRPNFGGMGMGGMNMQQMMKQAKKLQAQMAEEQENITAQEFVGKSADDLVVATFSGDRKLKDIKIDKDTIDPDDPDMLQDLIIDAVNKGLSQIDEATQASLGKYTKGLM.

Belongs to the YbaB/EbfC family. As to quaternary structure, homodimer.

The protein resides in the cytoplasm. The protein localises to the nucleoid. Its function is as follows. Binds to DNA and alters its conformation. May be involved in regulation of gene expression, nucleoid organization and DNA protection. The protein is Nucleoid-associated protein LBA0378 of Lactobacillus acidophilus (strain ATCC 700396 / NCK56 / N2 / NCFM).